The primary structure comprises 87 residues: U14-lycotoxin-Ls1a (87 aa).

A signal peptide spans 1–20 (MNSKVFAALLLLALSTCVLS). The region spanning 21–66 (EKYCPTPRNTSCKKMNIRNNCCRDSDCTSNAFCCAEPCGNFCHKAS) is the WAP domain. 5 cysteine pairs are disulfide-bonded: cysteine 24-cysteine 54, cysteine 32-cysteine 58, cysteine 41-cysteine 53, cysteine 42-cysteine 80, and cysteine 47-cysteine 62.

This sequence belongs to the venom protein 11 family. 01 (wap-1) subfamily. In terms of processing, contains 5 disulfide bonds. In terms of tissue distribution, expressed by the venom gland.

The protein localises to the secreted. Has antibacterial activity. The polypeptide is U14-lycotoxin-Ls1a (Lycosa singoriensis (Wolf spider)).